Here is a 399-residue protein sequence, read N- to C-terminus: Argininosuccinate synthase (399 aa).

ATP is bound at residue A9–S17. L-citrulline is bound at residue Y85. G115 provides a ligand contact to ATP. Residues T117, N121, and D122 each coordinate L-aspartate. N121 is a binding site for L-citrulline. Positions 125, 173, 258, and 270 each coordinate L-citrulline.

This sequence belongs to the argininosuccinate synthase family. Type 1 subfamily. As to quaternary structure, homotetramer.

Its subcellular location is the cytoplasm. It carries out the reaction L-citrulline + L-aspartate + ATP = 2-(N(omega)-L-arginino)succinate + AMP + diphosphate + H(+). It functions in the pathway amino-acid biosynthesis; L-arginine biosynthesis; L-arginine from L-ornithine and carbamoyl phosphate: step 2/3. In Streptococcus uberis (strain ATCC BAA-854 / 0140J), this protein is Argininosuccinate synthase.